A 281-amino-acid polypeptide reads, in one-letter code: Pantothenate synthetase (281 aa).

ATP is bound at residue 30–37 (MGYLHDGH). Histidine 37 acts as the Proton donor in catalysis. Glutamine 61 contacts (R)-pantoate. A beta-alanine-binding site is contributed by glutamine 61. 147-150 (GEKD) is an ATP binding site. Glutamine 153 serves as a coordination point for (R)-pantoate. ATP contacts are provided by residues isoleucine 176 and 184-187 (KSSR).

The protein belongs to the pantothenate synthetase family. Homodimer.

Its subcellular location is the cytoplasm. The catalysed reaction is (R)-pantoate + beta-alanine + ATP = (R)-pantothenate + AMP + diphosphate + H(+). It functions in the pathway cofactor biosynthesis; (R)-pantothenate biosynthesis; (R)-pantothenate from (R)-pantoate and beta-alanine: step 1/1. Its function is as follows. Catalyzes the condensation of pantoate with beta-alanine in an ATP-dependent reaction via a pantoyl-adenylate intermediate. In Clostridium acetobutylicum (strain ATCC 824 / DSM 792 / JCM 1419 / IAM 19013 / LMG 5710 / NBRC 13948 / NRRL B-527 / VKM B-1787 / 2291 / W), this protein is Pantothenate synthetase.